Consider the following 536-residue polypeptide: MRSLLLFTFSACVLLARVLLAGGASSGAGDTRPGSRRRAREALAAQKIEVLVLLPRDDSYLFSLARVRPAIEYALRSVEGNGTGRKLLPPGTRFQVAYEDSDCGNRALFSLVDRVAAARGAKPDLILGPVCEYAAAPVARLASHWDLPMLSAGALAAGFQHKDTEYSHLTRVAPAYAKMGEMMLALFRHHHWSRAALVYSDDKLERNCYFTLEGVHEVFQEEGLHTSAYNFDETKDLDLDDIVRYIQGSERVVIMCASGDTIRRIMLAVHRHGMTSGDYAFFNIELFNSSSYGDGSWRRGDKHDSEAKQAYSSLQTVTLLRTVKPEFEKFSMEVKSSVEKQGLNEEDYVNMFVEGFHDAILLYVLALHEVLRAGYSKKDGGKIIQQTWNRTFEGIAGQVSIDANGDRYGDFSVVAMTDTEAGTQEVIGDYFGKEGRFQMRSNVKYPWGPLKLRLDETRIVEHTNSSPCKSSGGLEESAVTGIVVGALLGAGLLMAFYFFRKKYRITIERRNQQEESNIGKHRELREDSIRSHFSVA.

A signal peptide spans Met1–Ser26. The propeptide occupies Gly27–Arg40. Topologically, residues Glu41 to Ala478 are extracellular. An N-linked (GlcNAc...) asparagine glycan is attached at Asn81. Residues Ser101, Val130, and Cys131 each contribute to the chloride site. 2 cysteine pairs are disulfide-bonded: Cys103–Cys131 and Cys208–Cys256. 2 N-linked (GlcNAc...) asparagine glycosylation sites follow: Asn288 and Asn389. A helical membrane pass occupies residues Val479–Phe499. Residues Arg500–Ala536 are Cytoplasmic-facing.

Belongs to the ANF receptor family. In terms of assembly, homodimer; disulfide-linked. Interacts with OSTN.

Its subcellular location is the cell membrane. Receptor for the natriuretic peptide hormones, binding with similar affinities atrial natriuretic peptide NPPA/ANP, brain natriuretic peptide NPPB/BNP, and C-type natriuretic peptide NPPC/CNP. May function as a clearance receptor for NPPA, NPPB and NPPC, regulating their local concentrations and effects. Acts as a regulator of osteoblast differentiation and bone growth by binding to its ligand osteocrin, thereby preventing binding between NPR3/NPR-C and natriuretic peptides, leading to increase cGMP production. In Mus musculus (Mouse), this protein is Atrial natriuretic peptide receptor 3 (Npr3).